The chain runs to 143 residues: Ribosome-binding factor A (143 aa).

A disordered region spans residues 117–143; that stretch reads DAEIARRSQGAMPAGEADPYRHSDEEE. A compositionally biased stretch (basic and acidic residues) spans 134 to 143; it reads DPYRHSDEEE.

It belongs to the RbfA family. In terms of assembly, monomer. Binds 30S ribosomal subunits, but not 50S ribosomal subunits or 70S ribosomes.

It localises to the cytoplasm. Functionally, one of several proteins that assist in the late maturation steps of the functional core of the 30S ribosomal subunit. Associates with free 30S ribosomal subunits (but not with 30S subunits that are part of 70S ribosomes or polysomes). Required for efficient processing of 16S rRNA. May interact with the 5'-terminal helix region of 16S rRNA. The sequence is that of Ribosome-binding factor A from Cutibacterium acnes (strain DSM 16379 / KPA171202) (Propionibacterium acnes).